A 142-amino-acid polypeptide reads, in one-letter code: Small ribosomal subunit protein bS6 (142 aa).

Positions N110–E133 are enriched in basic and acidic residues. Positions N110–E142 are disordered.

It belongs to the bacterial ribosomal protein bS6 family.

Functionally, binds together with bS18 to 16S ribosomal RNA. The chain is Small ribosomal subunit protein bS6 from Helicobacter pylori (strain P12).